A 140-amino-acid chain; its full sequence is Small ribosomal subunit protein bS6 (140 aa).

Residues 111-140 (EHFTGPAGAEGSDDESTESTDEAVAETADA) form a disordered region. Positions 121–140 (GSDDESTESTDEAVAETADA) are enriched in acidic residues.

It belongs to the bacterial ribosomal protein bS6 family.

Its function is as follows. Binds together with bS18 to 16S ribosomal RNA. This is Small ribosomal subunit protein bS6 from Rhodopirellula baltica (strain DSM 10527 / NCIMB 13988 / SH1).